A 668-amino-acid polypeptide reads, in one-letter code: Phosphatidylinositol 4-phosphate 5-kinase type-1 gamma (668 aa).

The disordered stretch occupies residues 45–67 (SMTAQPGPGHGKKLGHRGVDASG). The PIPK domain maps to 75 to 443 (TSSTLKGAIQ…RFFKFMSNTV (369 aa)). Residues Lys-265 and Lys-268 each carry the N6-acetyllysine modification. Arg-459 carries the post-translational modification Asymmetric dimethylarginine; alternate. An Omega-N-methylarginine; alternate modification is found at Arg-459. A compositionally biased stretch (low complexity) spans 526–535 (TTLSSTSLSI). Disordered stretches follow at residues 526–578 (TTLS…ITVQ) and 593–642 (EDAG…YFPT). Residue Ser-555 is modified to Phosphoserine. Position 639 is a phosphotyrosine; by EGFR (Tyr-639). Residues 641 to 668 (PTDERSWVYSPLHYSAQAPPASDGESDT) are mediates interaction with TLN2. Tyr-649 is modified (phosphotyrosine; by CSK). The residue at position 650 (Ser-650) is a Phosphoserine; by CDK5, MAPK1 and CDK1. Phosphoserine is present on residues Ser-662 and Ser-666. At Thr-668 the chain carries Phosphothreonine.

In terms of assembly, interacts with TLN1. Interacts with TLN2; interaction stimulates 1-phosphatidylinositol-4-phosphate 5-kinase activity. May compete with beta-integrins for the same binding site on TLN1 and TLN2. Interacts with ARF6; interaction stimulates 1-phosphatidylinositol-4-phosphate 5-kinase activity. Interacts with AP2B1. Interacts with AP2M1; phosphorylation of PIP5K1C by CSK disrupts the interaction; clathrin competes with PIP5K1C. Interacts with CDH1. Interacts with CSK. Interacts with PLCG1; interaction is abolished upon EGF stimulation. Interacts with LAPTM4B; promotes SNX5 association with LAPTM4B; kinase activity of PIP5K1C is required; interaction is regulated by phosphatidylinositol 4,5-bisphosphate generated by PIP5K1C. Phosphorylation on Ser-650 negatively regulates binding to TLN2 and is strongly stimulated in mitosis. Phosphorylation on Tyr-649 is necessary for targeting to focal adhesions. Phosphorylation on Ser-650 and Tyr-649 are mutually exclusive. Phosphorylated by SYK and CSK. Tyrosine phosphorylation is enhanced by PTK2 signaling. Phosphorylated at Tyr-639 upon EGF stimulation. Some studies suggest that phosphorylation on Tyr-649 enhances binding to tailins (TLN1 and TLN2). According to PubMed:15738269 phosphorylation at Tyr-649 does not directly enhance binding to tailins (TLN1 and TLN2) but may act indirectly by inhibiting phosphorylation at Ser-650. In terms of processing, acetylation at Lys-265 and Lys-268 seems to decrease lipid 1-phosphatidylinositol-4-phosphate 5-kinase activity. Deacetylation of these sites by SIRT1 positively regulates the exocytosis of TSH-containing granules from pituitary cells. As to expression, isoform 1 is strongly expressed in brain and also detected in heart and lung. In terms of tissue distribution, isoform 2 is strongly expressed in pancreas and liver and in lesser quantities in brain, heart, lung and kidney. Isoform 3 is detected in large amounts in heart and large intestine, is also present in lung, pancreas and thyroid, and to a lesser extent in brain, stomach and kidney.

It localises to the cell membrane. The protein resides in the endomembrane system. It is found in the cytoplasm. Its subcellular location is the cell junction. The protein localises to the focal adhesion. It localises to the adherens junction. The protein resides in the cell projection. It is found in the ruffle membrane. Its subcellular location is the phagocytic cup. The protein localises to the uropodium. It localises to the nucleus. The catalysed reaction is a 1,2-diacyl-sn-glycero-3-phospho-(1D-myo-inositol 4-phosphate) + ATP = a 1,2-diacyl-sn-glycero-3-phospho-(1D-myo-inositol-4,5-bisphosphate) + ADP + H(+). The enzyme catalyses 1-octadecanoyl-2-(5Z,8Z,11Z,14Z)-eicosatetraenoyl-sn-glycero-3-phospho-1D-myo-inositol 4-phosphate + ATP = 1-octadecanoyl-2-(5Z,8Z,11Z,14Z)-eicosatetraenoyl-sn-glycero-3-phospho-1D-myo-inositol 4,5-bisphosphate + ADP + H(+). It carries out the reaction 1-octadecanoyl-2-(9Z)-octadecenoyl-sn-glycero-3-phospho-1D-myo-inositol 4-phosphate + ATP = 1-octadecanoyl-2-(9Z)-octadecenoyl-sn-glycero-3-phospho-1D-myo-inositol 4,5-bisphosphate + ADP + H(+). It catalyses the reaction 1-octadecanoyl-2-(9Z)-octadecenoyl-sn-glycero-3-phospho-1D-myo-inositol + ATP = 1-octadecanoyl-2-(9Z)-octadecenoyl-sn-glycero-3-phospho-1D-myo-inositol 5-phosphate + ADP + H(+). The catalysed reaction is 1-octadecanoyl-2-(9Z,12Z)-octadecadienoyl-sn-glycero-3-phospho-1D-myo-inositol + ATP = 1-octadecanoyl-2-(9Z,12Z)-octadecadienoyl-sn-glycero-3-phospho-1D-myo-inositol 5-phosphate + ADP + H(+). The enzyme catalyses 1-octadecanoyl-2-(5Z,8Z,11Z,14Z-eicosatetraenoyl)-sn-glycero-3-phospho-(1D-myo-inositol) + ATP = 1-octadecanoyl-2-(5Z,8Z,11Z,14Z)-eicosatetraenoyl-sn-glycero-3-phospho-1D-myo-inositol 5-phosphate + ADP + H(+). It carries out the reaction 1,2-di-(9Z,12Z)-octadecadienoyl-sn-glycero-3-phospho-1D-myo-inositol + ATP = 1,2-di(9Z,12Z)-octadecadienoyl-sn-glycero-3-phospho-1D-myo-inositol 5-phosphate + ADP + H(+). Functionally, catalyzes the phosphorylation of phosphatidylinositol 4-phosphate (PtdIns(4)P/PI4P) to form phosphatidylinositol 4,5-bisphosphate (PtdIns(4,5)P2/PIP2), a lipid second messenger that regulates several cellular processes such as signal transduction, vesicle trafficking, actin cytoskeleton dynamics, cell adhesion, and cell motility. PtdIns(4,5)P2 can directly act as a second messenger or can be utilized as a precursor to generate other second messengers: inositol 1,4,5-trisphosphate (IP3), diacylglycerol (DAG) or phosphatidylinositol-3,4,5-trisphosphate (PtdIns(3,4,5)P3/PIP3). PIP5K1A-mediated phosphorylation of PtdIns(4)P is the predominant pathway for PtdIns(4,5)P2 synthesis. Together with PIP5K1A, is required for phagocytosis, both enzymes regulating different types of actin remodeling at sequential steps. Promotes particle attachment by generating the pool of PtdIns(4,5)P2 that induces controlled actin depolymerization to facilitate Fc-gamma-R clustering. Mediates RAC1-dependent reorganization of actin filaments. Required for synaptic vesicle transport. Controls the plasma membrane pool of PtdIns(4,5)P2 implicated in synaptic vesicle endocytosis and exocytosis. Plays a role in endocytosis mediated by clathrin and AP-2 (adaptor protein complex 2). Required for clathrin-coated pits assembly at the synapse. Participates in cell junction assembly. Modulates adherens junctions formation by facilitating CDH1/cadherin trafficking. Required for focal adhesion dynamics. Modulates the targeting of talins (TLN1 and TLN2) to the plasma membrane and their efficient assembly into focal adhesions. Regulates the interaction between talins (TLN1 and TLN2) and beta-integrins. Required for uropodium formation and retraction of the cell rear during directed migration. Has a role in growth factor-stimulated directional cell migration and adhesion. Required for talin assembly into nascent adhesions forming at the leading edge toward the direction of the growth factor. Negative regulator of T-cell activation and adhesion. Negatively regulates integrin alpha-L/beta-2 (LFA-1) polarization and adhesion induced by T-cell receptor. Together with PIP5K1A has a role during embryogenesis and together with PIP5K1B may have a role immediately after birth. The protein is Phosphatidylinositol 4-phosphate 5-kinase type-1 gamma of Homo sapiens (Human).